The sequence spans 195 residues: Dephospho-CoA kinase (195 aa).

Positions 3–195 constitute a DPCK domain; it reads IVGLTGGIGS…IALHENYLNH (193 aa). 11 to 16 serves as a coordination point for ATP; sequence GSGKSA.

The protein belongs to the CoaE family.

Its subcellular location is the cytoplasm. It catalyses the reaction 3'-dephospho-CoA + ATP = ADP + CoA + H(+). It participates in cofactor biosynthesis; coenzyme A biosynthesis; CoA from (R)-pantothenate: step 5/5. Functionally, catalyzes the phosphorylation of the 3'-hydroxyl group of dephosphocoenzyme A to form coenzyme A. This is Dephospho-CoA kinase from Acinetobacter baylyi (strain ATCC 33305 / BD413 / ADP1).